We begin with the raw amino-acid sequence, 435 residues long: Adenylosuccinate synthetase (435 aa).

GTP is bound by residues 11–17 (GDEGKGK) and 39–41 (GHT). Asp-12 functions as the Proton acceptor in the catalytic mechanism. Residues Asp-12 and Gly-39 each contribute to the Mg(2+) site. Residues 12–15 (DEGK), 37–40 (NAGH), Thr-134, Arg-148, Asn-230, Thr-245, and Arg-309 each bind IMP. His-40 acts as the Proton donor in catalysis. 305–311 (VTTGRKR) serves as a coordination point for substrate. Residues Arg-311, 337 to 339 (KLD), and 419 to 421 (GTG) contribute to the GTP site.

This sequence belongs to the adenylosuccinate synthetase family. In terms of assembly, homodimer. Mg(2+) serves as cofactor.

It is found in the cytoplasm. The enzyme catalyses IMP + L-aspartate + GTP = N(6)-(1,2-dicarboxyethyl)-AMP + GDP + phosphate + 2 H(+). It functions in the pathway purine metabolism; AMP biosynthesis via de novo pathway; AMP from IMP: step 1/2. Plays an important role in the de novo pathway and in the salvage pathway of purine nucleotide biosynthesis. Catalyzes the first committed step in the biosynthesis of AMP from IMP. This is Adenylosuccinate synthetase from Zygosaccharomyces rouxii (strain ATCC 2623 / CBS 732 / NBRC 1130 / NCYC 568 / NRRL Y-229).